The primary structure comprises 562 residues: NAD-dependent malic enzyme (562 aa).

The active-site Proton donor is the Y101. An NAD(+)-binding site is contributed by R154. K172 serves as the catalytic Proton acceptor. Residues E243, D244, and D267 each coordinate a divalent metal cation. NAD(+) is bound by residues D267 and N415.

The protein belongs to the malic enzymes family. As to quaternary structure, homotetramer. Requires Mg(2+) as cofactor. It depends on Mn(2+) as a cofactor.

The catalysed reaction is (S)-malate + NAD(+) = pyruvate + CO2 + NADH. The enzyme catalyses oxaloacetate + H(+) = pyruvate + CO2. This chain is NAD-dependent malic enzyme, found in Shewanella pealeana (strain ATCC 700345 / ANG-SQ1).